We begin with the raw amino-acid sequence, 286 residues long: Non-homologous end joining protein Ku (286 aa).

The Ku domain maps to 10 to 175 (TVGLVSFPVR…EEVREPDFVV (166 aa)). Residues 226 to 242 (ERQERQRREAGEVRQAD) show a composition bias toward basic and acidic residues. Residues 226-270 (ERQERQRREAGEVRQADETDEAAETEVPEVDIPASRAPGETGGEL) form a disordered region. Over residues 243-254 (ETDEAAETEVPE) the composition is skewed to acidic residues.

Belongs to the prokaryotic Ku family. Homodimer. Interacts with LigD.

In terms of biological role, with LigD forms a non-homologous end joining (NHEJ) DNA repair enzyme, which repairs dsDNA breaks with reduced fidelity. Binds linear dsDNA with 5'- and 3'- overhangs but not closed circular dsDNA nor ssDNA. Recruits and stimulates the ligase activity of LigD. The polypeptide is Non-homologous end joining protein Ku (Actinosynnema mirum (strain ATCC 29888 / DSM 43827 / JCM 3225 / NBRC 14064 / NCIMB 13271 / NRRL B-12336 / IMRU 3971 / 101)).